The chain runs to 850 residues: Trimethylguanosine synthase (850 aa).

Positions N54–P85 are disordered. Residue T61 is modified to Phosphothreonine. A phosphoserine mark is found at S92 and S152. Disordered stretches follow at residues D278–H311, E327–P454, and I523–C566. Residues T363 to S374 are compositionally biased toward basic and acidic residues. A compositionally biased stretch (polar residues) spans S375–T390. 2 positions are modified to phosphoserine: S405 and S431. Positions D424–D435 are enriched in acidic residues. Residues S548 to E562 are compositionally biased toward basic and acidic residues. Position 571 is a phosphoserine (S571). A disordered region spans residues T595 to L628. Positions K611 to K624 are enriched in basic residues. D713 is an S-adenosyl-L-methionine binding site.

Belongs to the methyltransferase superfamily. Trimethylguanosine synthase family. In terms of assembly, may form homooligomers. Interacts with CREBBP/CBP, EED/WAIT1, EP300/P300, NCOA6/PRIP, PPARBP/PBP and SMN. A 55 kDa isoform is widely expressed while a 90 kDa isoform is detected exclusively in brain and testis (at protein level).

It is found in the cytoplasm. It localises to the nucleus. The protein localises to the cajal body. Its subcellular location is the nucleolus. It carries out the reaction a 5'-end (N(7)-methyl 5'-triphosphoguanosine)-ribonucleoside in snRNA + S-adenosyl-L-methionine = a 5'-end (N(2),N(7)-dimethyl 5'-triphosphoguanosine)-ribonucleoside in snRNA + S-adenosyl-L-homocysteine + H(+). The enzyme catalyses a 5'-end (N(7)-methyl 5'-triphosphoguanosine)-ribonucleoside in snoRNA + S-adenosyl-L-methionine = a 5'-end (N(2),N(7)-dimethyl 5'-triphosphoguanosine)-ribonucleoside in snoRNA + S-adenosyl-L-homocysteine + H(+). It catalyses the reaction a 5'-end (N(2),N(7)-dimethyl 5'-triphosphoguanosine)-ribonucleoside in snRNA + S-adenosyl-L-methionine = a 5'-end (N(2),N(2),N(7)-trimethyl 5'-triphosphoguanosine)-ribonucleoside in snRNA + S-adenosyl-L-homocysteine + H(+). The catalysed reaction is a 5'-end (N(2),N(7)-dimethyl 5'-triphosphoguanosine)-ribonucleoside in snoRNA + S-adenosyl-L-methionine = a 5'-end (N(2),N(2),N(7)-trimethyl 5'-triphosphoguanosine)-ribonucleoside in snoRNA + S-adenosyl-L-homocysteine + H(+). In terms of biological role, catalyzes the 2 serial methylation steps for the conversion of the 7-monomethylguanosine (m(7)G) caps of snRNAs and snoRNAs to a 2,2,7-trimethylguanosine (m(2,2,7)G) cap structure. The enzyme is specific for guanine, and N7 methylation must precede N2 methylation. Hypermethylation of the m7G cap of U snRNAs leads to their concentration in nuclear foci, their colocalization with coilin and the formation of canonical Cajal bodies (CBs). Plays a role in transcriptional regulation. In Rattus norvegicus (Rat), this protein is Trimethylguanosine synthase.